Here is a 227-residue protein sequence, read N- to C-terminus: Translation initiation factor 6 (227 aa).

This sequence belongs to the eIF-6 family.

Its function is as follows. Binds to the 50S ribosomal subunit and prevents its association with the 30S ribosomal subunit to form the 70S initiation complex. The polypeptide is Translation initiation factor 6 (Pyrococcus furiosus (strain ATCC 43587 / DSM 3638 / JCM 8422 / Vc1)).